A 148-amino-acid polypeptide reads, in one-letter code: Large ribosomal subunit protein uL15 (148 aa).

The segment covering 1–30 (MTHSKRNTRKLRGHVSHGHGRVGKHRKHPG) has biased composition (basic residues). Positions 1-38 (MTHSKRNTRKLRGHVSHGHGRVGKHRKHPGGRGMAGPE) are disordered.

The protein belongs to the universal ribosomal protein uL15 family.

In Euplotes crassus, this protein is Large ribosomal subunit protein uL15 (RPL27A).